The primary structure comprises 465 residues: Kynureninase (465 aa).

Pyridoxal 5'-phosphate is bound by residues leucine 133, threonine 134, 161-164 (FPSD), serine 217, aspartate 246, histidine 249, and tyrosine 271. The residue at position 272 (lysine 272) is an N6-(pyridoxal phosphate)lysine. Tryptophan 302 and asparagine 330 together coordinate pyridoxal 5'-phosphate.

This sequence belongs to the kynureninase family. As to quaternary structure, homodimer. It depends on pyridoxal 5'-phosphate as a cofactor.

It is found in the cytoplasm. The enzyme catalyses L-kynurenine + H2O = anthranilate + L-alanine + H(+). The catalysed reaction is 3-hydroxy-L-kynurenine + H2O = 3-hydroxyanthranilate + L-alanine + H(+). Its pathway is amino-acid degradation; L-kynurenine degradation; L-alanine and anthranilate from L-kynurenine: step 1/1. The protein operates within cofactor biosynthesis; NAD(+) biosynthesis; quinolinate from L-kynurenine: step 2/3. In terms of biological role, catalyzes the cleavage of L-kynurenine (L-Kyn) and L-3-hydroxykynurenine (L-3OHKyn) into anthranilic acid (AA) and 3-hydroxyanthranilic acid (3-OHAA), respectively. The chain is Kynureninase from Nematostella vectensis (Starlet sea anemone).